Reading from the N-terminus, the 174-residue chain is Gamma-crystallin E (174 aa).

Beta/gamma crystallin 'Greek key' domains are found at residues 2-40 and 41-83; these read GKITFYEDRGFQGRHYECSTDHSNLQPYFSRCNSVRVDS and GCWM…RLIP. The tract at residues 84 to 87 is connecting peptide; it reads HSSS. Beta/gamma crystallin 'Greek key' domains are found at residues 88–128 and 129–171; these read HRIR…HVME and GYWV…RRIM.

This sequence belongs to the beta/gamma-crystallin family. As to expression, detected in the superior olivary complex and fibers of the ventral aoustic stria of the auditory hindbrain.

In terms of biological role, crystallins are the dominant structural components of the vertebrate eye lens. The chain is Gamma-crystallin E (Cryge) from Rattus norvegicus (Rat).